The primary structure comprises 437 residues: Ribosomal protein uS12 methylthiotransferase RimO (437 aa).

The 112-residue stretch at 5 to 116 (PTISVSHLGC…IAEVIQRVET (112 aa)) folds into the MTTase N-terminal domain. [4Fe-4S] cluster-binding residues include cysteine 14, cysteine 50, cysteine 79, cysteine 154, cysteine 158, and cysteine 161. In terms of domain architecture, Radical SAM core spans 140–369 (TTNEAVAYLR…MEIQQPIAAK (230 aa)). The region spanning 372-437 (QKCVGQTVEV…DVYDLYGKVI (66 aa)) is the TRAM domain.

The protein belongs to the methylthiotransferase family. RimO subfamily. [4Fe-4S] cluster serves as cofactor.

The protein localises to the cytoplasm. The enzyme catalyses L-aspartate(89)-[ribosomal protein uS12]-hydrogen + (sulfur carrier)-SH + AH2 + 2 S-adenosyl-L-methionine = 3-methylsulfanyl-L-aspartate(89)-[ribosomal protein uS12]-hydrogen + (sulfur carrier)-H + 5'-deoxyadenosine + L-methionine + A + S-adenosyl-L-homocysteine + 2 H(+). Catalyzes the methylthiolation of an aspartic acid residue of ribosomal protein uS12. The protein is Ribosomal protein uS12 methylthiotransferase RimO of Crocosphaera subtropica (strain ATCC 51142 / BH68) (Cyanothece sp. (strain ATCC 51142)).